We begin with the raw amino-acid sequence, 240 residues long: Uridylate kinase (240 aa).

13-16 contacts ATP; the sequence is KISG. Glycine 55 contacts UMP. ATP contacts are provided by glycine 56 and arginine 60. UMP-binding positions include aspartate 75 and 136-143; that span reads TGNPFFTT. 4 residues coordinate ATP: threonine 163, glutamine 164, tyrosine 169, and aspartate 172.

This sequence belongs to the UMP kinase family. As to quaternary structure, homohexamer.

The protein resides in the cytoplasm. The catalysed reaction is UMP + ATP = UDP + ADP. It participates in pyrimidine metabolism; CTP biosynthesis via de novo pathway; UDP from UMP (UMPK route): step 1/1. Inhibited by UTP. Catalyzes the reversible phosphorylation of UMP to UDP. The sequence is that of Uridylate kinase from Paramagnetospirillum magneticum (strain ATCC 700264 / AMB-1) (Magnetospirillum magneticum).